We begin with the raw amino-acid sequence, 337 residues long: Protein RecA (337 aa).

66–73 provides a ligand contact to ATP; the sequence is GPESSGKT.

The protein belongs to the RecA family.

Its subcellular location is the cytoplasm. Functionally, can catalyze the hydrolysis of ATP in the presence of single-stranded DNA, the ATP-dependent uptake of single-stranded DNA by duplex DNA, and the ATP-dependent hybridization of homologous single-stranded DNAs. It interacts with LexA causing its activation and leading to its autocatalytic cleavage. In Mesomycoplasma hyopneumoniae (strain 232) (Mycoplasma hyopneumoniae), this protein is Protein RecA.